The following is a 466-amino-acid chain: Uronate isomerase (466 aa).

The protein belongs to the metallo-dependent hydrolases superfamily. Uronate isomerase family.

It catalyses the reaction D-glucuronate = D-fructuronate. The catalysed reaction is aldehydo-D-galacturonate = keto-D-tagaturonate. It participates in carbohydrate metabolism; pentose and glucuronate interconversion. The chain is Uronate isomerase (uxaC) from Brucella melitensis biotype 1 (strain ATCC 23456 / CCUG 17765 / NCTC 10094 / 16M).